The sequence spans 164 residues: UPF0114 protein YqhA (164 aa).

3 consecutive transmembrane segments (helical) span residues 15-35 (LLAP…LKFF), 53-73 (LILV…LVMV), and 136-156 (LMWY…MGYL).

The protein belongs to the UPF0114 family.

The protein localises to the cell membrane. The polypeptide is UPF0114 protein YqhA (Shigella dysenteriae serotype 1 (strain Sd197)).